We begin with the raw amino-acid sequence, 709 residues long: MLLLQQPPLVSTRFHSLYFLTHHHHHHHRFFQPPISAFSATTSASLPSPSPSSSSSYFSSWNGLDTNEEEDNEFSSEVHRRYDFSPLLKFLSRFGPVELALDSESESEASPESLNPVEFDLVESYRAVPAPYWHSLIKSLTSSTSSLGLAYAVVSWLQKHNLCFSYELLYSILIHALGRSEKLYEAFLLSQKQTLTPLTYNALIGACARNNDIEKALNLIAKMRQDGYQSDFVNYSLVIQSLTRSNKIDSVMLLRLYKEIERDKLELDVQLVNDIIMGFAKSGDPSKALQLLGMAQATGLSAKTATLVSIISALADSGRTLEAEALFEELRQSGIKPRTRAYNALLKGYVKTGPLKDAESMVSEMEKRGVSPDEHTYSLLIDAYVNAGRWESARIVLKEMEAGDVQPNSFVFSRLLAGFRDRGEWQKTFQVLKEMKSIGVKPDRQFYNVVIDTFGKFNCLDHAMTTFDRMLSEGIEPDRVTWNTLIDCHCKHGRHIVAEEMFEAMERRGCLPCATTYNIMINSYGDQERWDDMKRLLGKMKSQGILPNVVTHTTLVDVYGKSGRFNDAIECLEEMKSVGLKPSSTMYNALINAYAQRGLSEQAVNAFRVMTSDGLKPSLLALNSLINAFGEDRRDAEAFAVLQYMKENGVKPDVVTYTTLMKALIRVDKFQKVPVVYEEMIMSGCKPDRKARSMLRSALRYMKQTLRAS.

A chloroplast-targeting transit peptide spans 1 to 54; the sequence is MLLLQQPPLVSTRFHSLYFLTHHHHHHHRFFQPPISAFSATTSASLPSPSPSSS. PPR repeat units lie at residues 196–230, 231–267, 268–302, 303–337, 338–372, 373–407, 408–442, 443–477, 478–512, 513–547, 548–582, 583–617, 618–652, and 653–687; these read TPLT…GYQS, DFVN…KLEL, DVQL…GLSA, KTAT…GIKP, RTRA…GVSP, DEHT…DVQP, NSFV…GVKP, DRQF…GIEP, DRVT…GCLP, CATT…GILP, NVVT…GLKP, SSTM…GLKP, SLLA…GVKP, and DVVT…GCKP.

The protein belongs to the PPR family. P subfamily. Interacts with PDE338.

The protein resides in the plastid. The protein localises to the chloroplast stroma. Its subcellular location is the chloroplast thylakoid. It is found in the chloroplast. Its function is as follows. Required for chloroplast protein synthesis and accumulation of subunits of the thylakoid protein complexes. Activates psaC and petA translation by binding their 5'-UTRs. Required for the correct processing of petB and petD mRNAs. Interacts with the petB and petD intergenic region and is required for the generation of petB and petD monocistronic RNAs. In Arabidopsis thaliana (Mouse-ear cress), this protein is Pentatricopeptide repeat-containing protein At5g42310, chloroplastic.